A 790-amino-acid chain; its full sequence is Nuclear cap-binding protein subunit 1 (790 aa).

The segment at 1–26 (MSRRRHSYENDGGQPHKRRKTSDANE) is disordered. The Nuclear localization signal signature appears at 3–20 (RRRHSYENDGGQPHKRRK). Position 7 is a phosphoserine (Ser7). Thr21 is modified (phosphothreonine). Phosphoserine is present on residues Ser22 and Ser201. Residues 28–240 (EDHLESLICK…CLWAQIQKLK (213 aa)) enclose the MIF4G domain. Position 204 is an N6-acetyllysine (Lys204). A coiled-coil region spans residues 643–713 (STIRKMNKHV…SEQKNLFLVI (71 aa)). Residues 666–685 (LARQHKRRSDDDDRSSDRKD) form a disordered region. Lys684 is covalently cross-linked (Glycyl lysine isopeptide (Lys-Gly) (interchain with G-Cter in SUMO2)). Lys698 carries the N6-acetyllysine modification.

Belongs to the NCBP1 family. In terms of assembly, component of the nuclear cap-binding complex (CBC), a heterodimer composed of NCBP1/CBP80 and NCBP2/CBP20 that interacts with m7GpppG-capped RNA. Found in a U snRNA export complex containing PHAX/RNUXA, NCBP1/CBP80, NCBP2/CBP20, RAN, XPO1 and m7G-capped RNA. Identified in a IGF2BP1-dependent mRNP granule complex containing untranslated mRNAs. Interacts with PHAX/RNUXA, SRRT/ARS2, EIF4G2, IGF2BP1, HNRNPF, HNRNPH1, KIAA0427/CTIF, PARN, DROSHA, UPF1 and ALYREF/THOC4. May interact with EIF4G1; the interaction is however controversial. The large PER complex involved in the repression of transcriptional termination is composed of at least PER2, CDK9, DDX5, DHX9, NCBP1/CBP80 and POLR2A (active). Component of an alternative nuclear cap-binding complex (CBC) composed of NCBP1/CBP80 and NCBP3. Interacts with METTL3. Interacts with ZFC3H1 in a RNase-insensitive manner. Interacts with MTREX. Interacts with TASOR. Interacts with DHX34; the interaction is RNA-dependent. Interacts with KPNA3. Post-translationally, dephosphorylated at Thr-21 by the PNUTS-PP1 complex during RNA polymerase II transcription pause-release. As to expression, expressed in the spermatogonia, spermatocytes and granular cells within the cerebellum.

The protein localises to the nucleus. The protein resides in the cytoplasm. In terms of biological role, component of the cap-binding complex (CBC), which binds cotranscriptionally to the 5'-cap of pre-mRNAs and is involved in various processes such as pre-mRNA splicing, translation regulation, nonsense-mediated mRNA decay, RNA-mediated gene silencing (RNAi) by microRNAs (miRNAs) and mRNA export. The CBC complex is involved in mRNA export from the nucleus via its interaction with ALYREF/THOC4/ALY, leading to the recruitment of the mRNA export machinery to the 5'-end of mRNA and to mRNA export in a 5' to 3' direction through the nuclear pore. The CBC complex is also involved in mediating U snRNA and intronless mRNAs export from the nucleus. The CBC complex is essential for a pioneer round of mRNA translation, before steady state translation when the CBC complex is replaced by cytoplasmic cap-binding protein eIF4E. The pioneer round of mRNA translation mediated by the CBC complex plays a central role in nonsense-mediated mRNA decay (NMD), NMD only taking place in mRNAs bound to the CBC complex, but not on eIF4E-bound mRNAs. The CBC complex enhances NMD in mRNAs containing at least one exon-junction complex (EJC) via its interaction with UPF1, promoting the interaction between UPF1 and UPF2. The CBC complex is also involved in 'failsafe' NMD, which is independent of the EJC complex, while it does not participate in Staufen-mediated mRNA decay (SMD). During cell proliferation, the CBC complex is also involved in microRNAs (miRNAs) biogenesis via its interaction with SRRT/ARS2 and is required for miRNA-mediated RNA interference. The CBC complex also acts as a negative regulator of PARN, thereby acting as an inhibitor of mRNA deadenylation. In the CBC complex, NCBP1/CBP80 does not bind directly capped RNAs (m7GpppG-capped RNA) but is required to stabilize the movement of the N-terminal loop of NCBP2/CBP20 and lock the CBC into a high affinity cap-binding state with the cap structure. Associates with NCBP3 to form an alternative cap-binding complex (CBC) which plays a key role in mRNA export and is particularly important in cellular stress situations such as virus infections. The conventional CBC with NCBP2 binds both small nuclear RNA (snRNA) and messenger (mRNA) and is involved in their export from the nucleus whereas the alternative CBC with NCBP3 does not bind snRNA and associates only with mRNA thereby playing a role only in mRNA export. NCBP1/CBP80 is required for cell growth and viability. This chain is Nuclear cap-binding protein subunit 1 (Ncbp1), found in Mus musculus (Mouse).